We begin with the raw amino-acid sequence, 41 residues long: Disintegrin obtustatin (41 aa).

Cystine bridges form between cysteine 1–cysteine 10, cysteine 6–cysteine 29, cysteine 7–cysteine 34, and cysteine 19–cysteine 36. Residues 1-41 enclose the Disintegrin domain; the sequence is CTTGPCCRQCKLKPAGTTCWKTSLTSHYCTGKSCDCPLYPG. The Cell attachment site; atypical (KTS) signature appears at 21–23; it reads KTS.

The protein belongs to the disintegrin family. Short disintegrin subfamily. Monomer. Expressed by the venom gland.

It is found in the secreted. Its function is as follows. Is a potent and selective inhibitor of alpha-1/beta-1 (ITGA1/ITGB1) integrin. It blocks the adhesion of alpha-1/beta-1-expressing K562 cells to immobilized collagens IV and I with IC(50) of 2 and 0.5 nM, respectively. Potently inhibits angiogenesis in chicken and in mouse model and reduces tumor development by half. Is 25-fold less potent than viperistatin. This is Disintegrin obtustatin from Macrovipera lebetina obtusa (Levant blunt-nosed viper).